Here is a 293-residue protein sequence, read N- to C-terminus: Ribosomal protein L11 methyltransferase (293 aa).

4 residues coordinate S-adenosyl-L-methionine: Thr145, Gly166, Asp188, and Asn230.

It belongs to the methyltransferase superfamily. PrmA family.

It localises to the cytoplasm. The enzyme catalyses L-lysyl-[protein] + 3 S-adenosyl-L-methionine = N(6),N(6),N(6)-trimethyl-L-lysyl-[protein] + 3 S-adenosyl-L-homocysteine + 3 H(+). Its function is as follows. Methylates ribosomal protein L11. The protein is Ribosomal protein L11 methyltransferase of Shewanella baltica (strain OS155 / ATCC BAA-1091).